Consider the following 367-residue polypeptide: UDP-N-acetylglucosamine--N-acetylmuramyl-(pentapeptide) pyrophosphoryl-undecaprenol N-acetylglucosamine transferase (367 aa).

UDP-N-acetyl-alpha-D-glucosamine-binding positions include 15 to 17 (TGG), asparagine 127, arginine 163, serine 191, isoleucine 249, and glutamine 294.

It belongs to the glycosyltransferase 28 family. MurG subfamily.

The protein localises to the cell inner membrane. The enzyme catalyses di-trans,octa-cis-undecaprenyl diphospho-N-acetyl-alpha-D-muramoyl-L-alanyl-D-glutamyl-meso-2,6-diaminopimeloyl-D-alanyl-D-alanine + UDP-N-acetyl-alpha-D-glucosamine = di-trans,octa-cis-undecaprenyl diphospho-[N-acetyl-alpha-D-glucosaminyl-(1-&gt;4)]-N-acetyl-alpha-D-muramoyl-L-alanyl-D-glutamyl-meso-2,6-diaminopimeloyl-D-alanyl-D-alanine + UDP + H(+). It participates in cell wall biogenesis; peptidoglycan biosynthesis. Functionally, cell wall formation. Catalyzes the transfer of a GlcNAc subunit on undecaprenyl-pyrophosphoryl-MurNAc-pentapeptide (lipid intermediate I) to form undecaprenyl-pyrophosphoryl-MurNAc-(pentapeptide)GlcNAc (lipid intermediate II). The polypeptide is UDP-N-acetylglucosamine--N-acetylmuramyl-(pentapeptide) pyrophosphoryl-undecaprenol N-acetylglucosamine transferase (Burkholderia ambifaria (strain MC40-6)).